A 474-amino-acid chain; its full sequence is Gamma-aminobutyric acid receptor subunit beta-2 (474 aa).

An N-terminal signal peptide occupies residues 1-25 (MWRVRKRGYFGIWSFPLIIAAVCAQ). At 26–244 (SVNDPSNMSL…SFKLKRNIGY (219 aa)) the chain is on the extracellular side. Residues N32 and N104 are each glycosylated (N-linked (GlcNAc...) asparagine). Y121 is a binding site for histamine. C160 and C174 are oxidised to a cystine. N-linked (GlcNAc...) asparagine glycosylation is present at N173. Histamine-binding positions include 180–181 (SY) and T226. Positions 181 and 226 each coordinate 4-aminobutanoate. 3 helical membrane-spanning segments follow: residues 245 to 266 (FILQTYMPSILITILSWVSFWI), 270 to 292 (ASAARVALGITTVLTMTTINTHL), and 304 to 326 (AIDMYLMGCFVFVFMALLEYALV). Topologically, residues 327–451 (NYIFFGRGPQ…DLTDVNAIDR (125 aa)) are cytoplasmic. Y403 is modified (phosphotyrosine). The chain crosses the membrane as a helical span at residues 452 to 473 (WSRIFFPVVFSFFNIVYWLYYV).

Belongs to the ligand-gated ion channel (TC 1.A.9) family. Gamma-aminobutyric acid receptor (TC 1.A.9.5) subfamily. GABRB2 sub-subfamily. Heteropentamer, formed by a combination of alpha (GABRA1-6), beta (GABRB1-3), gamma (GABRG1-3), delta (GABRD), epsilon (GABRE), rho (GABRR1-3), pi (GABRP) and theta (GABRQ) chains, each subunit exhibiting distinct physiological and pharmacological properties. Interacts with UBQLN1. May interact with KIF21B. Identified in a complex of 720 kDa composed of LHFPL4, NLGN2, GABRA1, GABRB2, GABRG2 and GABRB3. Glycosylated. Expressed in brain (at protein level), in cerebellar granule cells. Expressed in lungs, in alveolar epithelium.

The protein localises to the postsynaptic cell membrane. Its subcellular location is the cell membrane. The protein resides in the cytoplasmic vesicle membrane. The catalysed reaction is chloride(in) = chloride(out). Its activity is regulated as follows. Allosterically activated by benzodiazepines and the anesthetic etomidate. Inhibited by the antagonist bicuculline. Potentiated by histamine. In terms of biological role, beta subunit of the heteropentameric ligand-gated chloride channel gated by gamma-aminobutyric acid (GABA), a major inhibitory neurotransmitter in the brain. GABA-gated chloride channels, also named GABA(A) receptors (GABAAR), consist of five subunits arranged around a central pore and contain GABA active binding site(s) located at the alpha and beta subunit interface(s). When activated by GABA, GABAARs selectively allow the flow of chloride anions across the cell membrane down their electrochemical gradient. Chloride influx into the postsynaptic neuron following GABAAR opening decreases the neuron ability to generate a new action potential, thereby reducing nerve transmission. GABAARs containing alpha-1 and beta-2 or -3 subunits exhibit synaptogenic activity; the gamma-2 subunit being necessary but not sufficient to induce rapid synaptic contacts formation. Extrasynaptic beta-2 receptors contribute to the tonic GABAergic inhibition. Beta-containing GABAARs can simultaneously bind GABA and histamine where histamine binds at the interface of two neighboring beta subunits, which may be involved in the regulation of sleep and wakefulness. This chain is Gamma-aminobutyric acid receptor subunit beta-2, found in Rattus norvegicus (Rat).